A 354-amino-acid polypeptide reads, in one-letter code: ATPase GET3 (354 aa).

ATP is bound at residue 26 to 33 (KGGVGKTT). Asp-57 is an active-site residue. Residues Glu-245 and Asn-272 each contribute to the ATP site. Zn(2+) contacts are provided by Cys-285 and Cys-288.

This sequence belongs to the arsA ATPase family. In terms of assembly, homodimer. Component of the Golgi to ER traffic (GET) complex, which is composed of GET1, GET2 and GET3. Within the complex, GET1 and GET2 form a heterotetramer which is stabilized by phosphatidylinositol binding and which binds to the GET3 homodimer. Interacts with the chloride channel protein GEF1.

It localises to the cytoplasm. The protein localises to the endoplasmic reticulum. It is found in the golgi apparatus. ATPase required for the post-translational delivery of tail-anchored (TA) proteins to the endoplasmic reticulum. Recognizes and selectively binds the transmembrane domain of TA proteins in the cytosol. This complex then targets to the endoplasmic reticulum by membrane-bound receptors GET1 and GET2, where the tail-anchored protein is released for insertion. This process is regulated by ATP binding and hydrolysis. ATP binding drives the homodimer towards the closed dimer state, facilitating recognition of newly synthesized TA membrane proteins. ATP hydrolysis is required for insertion. Subsequently, the homodimer reverts towards the open dimer state, lowering its affinity for the GET1-GET2 receptor, and returning it to the cytosol to initiate a new round of targeting. Cooperates with the HDEL receptor ERD2 to mediate the ATP-dependent retrieval of resident ER proteins that contain a C-terminal H-D-E-L retention signal from the Golgi to the ER. Involved in low-level resistance to the oxyanions arsenite and arsenate, and in heat tolerance. The protein is ATPase GET3 of Saccharomyces cerevisiae (strain RM11-1a) (Baker's yeast).